We begin with the raw amino-acid sequence, 96 residues long: Tenecin-3 (96 aa).

An N-terminal signal peptide occupies residues 1–18 (MKTFVICLILVVAVSAAP). The tract at residues 19–96 (DHHDGHLGGH…HQGGYKTHGH (78 aa)) is disordered. 12 repeat units span residues 23–26 (GHLG), 31–34 (GHQG), 35–38 (GQQG), 39–42 (GHLG), 43–46 (GQQG), 47–50 (GHLG), 51–54 (GHQG), 59–62 (GHLG), 63–66 (GHQG), 67–70 (GIGG), 77–80 (GQHG), and 86–89 (GHQG). The 12 X 4 AA repeats of G-X-X-G stretch occupies residues 23–89 (GHLGGHQTGH…GPGTGAGHQG (67 aa)). The segment covering 26 to 89 (GGHQTGHQGG…GPGTGAGHQG (64 aa)) has biased composition (gly residues).

It to H.diomphalia holotricin 3.

The protein resides in the secreted. Its function is as follows. Antifungal heat stable protein produced in response to injury. It is active against C.albicans. No antibacterial activity against Gram-positive and Gram-negative bacteria. The protein is Tenecin-3 of Tenebrio molitor (Yellow mealworm beetle).